Reading from the N-terminus, the 193-residue chain is 3-isopropylmalate dehydratase small subunit (193 aa).

This sequence belongs to the LeuD family. LeuD type 1 subfamily. Heterodimer of LeuC and LeuD.

It catalyses the reaction (2R,3S)-3-isopropylmalate = (2S)-2-isopropylmalate. It functions in the pathway amino-acid biosynthesis; L-leucine biosynthesis; L-leucine from 3-methyl-2-oxobutanoate: step 2/4. Its function is as follows. Catalyzes the isomerization between 2-isopropylmalate and 3-isopropylmalate, via the formation of 2-isopropylmaleate. In Listeria monocytogenes serovar 1/2a (strain ATCC BAA-679 / EGD-e), this protein is 3-isopropylmalate dehydratase small subunit.